A 1173-amino-acid polypeptide reads, in one-letter code: DNA-directed RNA polymerase subunit beta (1173 aa).

It belongs to the RNA polymerase beta chain family. As to quaternary structure, the RNAP catalytic core consists of 2 alpha, 1 beta, 1 beta' and 1 omega subunit. When a sigma factor is associated with the core the holoenzyme is formed, which can initiate transcription.

The enzyme catalyses RNA(n) + a ribonucleoside 5'-triphosphate = RNA(n+1) + diphosphate. Its function is as follows. DNA-dependent RNA polymerase catalyzes the transcription of DNA into RNA using the four ribonucleoside triphosphates as substrates. This Kosmotoga olearia (strain ATCC BAA-1733 / DSM 21960 / TBF 19.5.1) protein is DNA-directed RNA polymerase subunit beta.